The following is a 417-amino-acid chain: Histidinol-phosphate aminotransferase 1, chloroplastic (417 aa).

Residues 1–40 (MGVINVQGSPSFSIHSSESNLRKSRALKKPFCSIRNRVYC) constitute a chloroplast transit peptide. N-acetylalanine is present on Ala-41. Lys-277 bears the N6-(pyridoxal phosphate)lysine mark.

The protein belongs to the class-II pyridoxal-phosphate-dependent aminotransferase family. Histidinol-phosphate aminotransferase subfamily. In terms of assembly, homodimer. Pyridoxal 5'-phosphate is required as a cofactor. As to expression, expressed in both vegetative and reproductive tissues.

It localises to the plastid. The protein localises to the chloroplast. It catalyses the reaction L-histidinol phosphate + 2-oxoglutarate = 3-(imidazol-4-yl)-2-oxopropyl phosphate + L-glutamate. It functions in the pathway amino-acid biosynthesis; L-histidine biosynthesis; L-histidine from 5-phospho-alpha-D-ribose 1-diphosphate: step 7/9. This Arabidopsis thaliana (Mouse-ear cress) protein is Histidinol-phosphate aminotransferase 1, chloroplastic (HISN6A).